Reading from the N-terminus, the 185-residue chain is MINDIQKRTAERMQKSIEALKHEFAKIRTGRAHPSLLEHIRVSYYGNEVPLTQVANVAVEDARSLAVTPWERNMVQAIEKAIMTSDLGLNPSTAGTVIRVPLPPLTEERRRDLIKVVRQEAENGRVAIRNIRRDANNELKAALKEKLISEDEDRRSQEQIQKTTDQFIKEIDKLLEQKEADLLAV.

The protein belongs to the RRF family.

Its subcellular location is the cytoplasm. Its function is as follows. Responsible for the release of ribosomes from messenger RNA at the termination of protein biosynthesis. May increase the efficiency of translation by recycling ribosomes from one round of translation to another. The polypeptide is Ribosome-recycling factor (Methylococcus capsulatus (strain ATCC 33009 / NCIMB 11132 / Bath)).